The following is a 1120-amino-acid chain: Putative GTPase-activating protein AN11010 (1120 aa).

The Rab-GAP TBC domain occupies 291 to 479 (GLPNRLRGEI…RVLDVFFLEG (189 aa)). 5 disordered regions span residues 673–702 (DSPG…PSPA), 859–903 (DEVK…PNNP), 960–979 (AAKQ…SGGI), 1017–1068 (RNAL…ETDR), and 1081–1120 (GKDD…EFES). Residues 864–878 (ESTPSPEGETPGTPS) are compositionally biased toward low complexity. The span at 960-970 (AAKQQPTSSGP) shows a compositional bias: polar residues. Positions 1023 to 1032 (DDDDEDDEDD) are enriched in acidic residues. Composition is skewed to basic and acidic residues over residues 1057-1068 (DPERRSVRETDR) and 1081-1095 (GKDD…DSHQ).

The chain is Putative GTPase-activating protein AN11010 from Emericella nidulans (strain FGSC A4 / ATCC 38163 / CBS 112.46 / NRRL 194 / M139) (Aspergillus nidulans).